Here is a 73-residue protein sequence, read N- to C-terminus: RNA-binding protein Hfq (73 aa).

A Sm domain is found at 8–68; the sequence is DQFLNQIRKD…ISTFAPQKNV (61 aa).

This sequence belongs to the Hfq family. In terms of assembly, homohexamer.

Its function is as follows. RNA chaperone that binds small regulatory RNA (sRNAs) and mRNAs to facilitate mRNA translational regulation in response to envelope stress, environmental stress and changes in metabolite concentrations. Also binds with high specificity to tRNAs. The protein is RNA-binding protein Hfq of Bacillus velezensis (strain DSM 23117 / BGSC 10A6 / LMG 26770 / FZB42) (Bacillus amyloliquefaciens subsp. plantarum).